The sequence spans 236 residues: UPF0257 lipoprotein YnfC (236 aa).

A signal peptide spans 1–16 (MKYKLLPCLLAIFLTG). Cys-17 carries N-palmitoyl cysteine lipidation. A lipid anchor (S-diacylglycerol cysteine) is attached at Cys-17.

It belongs to the UPF0257 family.

It is found in the cell membrane. This chain is UPF0257 lipoprotein YnfC, found in Escherichia coli O17:K52:H18 (strain UMN026 / ExPEC).